A 199-amino-acid polypeptide reads, in one-letter code: MKQSHFFAHLSRLKLINRWPLMRNVRTENVSEHSLQVAMVAHALAAIKNRKFGGQLNAEHIALLAMYHDTSEVLTGDLPTPVKYFNSQIAQEYKAIEKIAQQKLVDMAPDELRDIFAPLIDENAWSEEEQAIVKQADALCAYLKCLEELSAGNNEFKLAKTRLEKTLALRRSQEMDYFMAVFVPSFHLSLDEISQDSPL.

Residues 18–19 (RW) and His33 each bind substrate. Positions 30-142 (VSEHSLQVAM…VKQADALCAY (113 aa)) constitute an HD domain. The a divalent metal cation site is built by His33, His68, and Asp69. Substrate is bound by residues Asp69, 77–80 (DLPT), and Asp137. Residue Asp137 participates in a divalent metal cation binding.

Belongs to the 5DNU family. As to quaternary structure, homodimer. A divalent metal cation is required as a cofactor.

It is found in the cytoplasm. It catalyses the reaction a 2'-deoxyribonucleoside 5'-phosphate + H2O = a 2'-deoxyribonucleoside + phosphate. Its function is as follows. Catalyzes the strictly specific dephosphorylation of 2'-deoxyribonucleoside 5'-monophosphates. The protein is 5'-deoxynucleotidase YfbR of Salmonella arizonae (strain ATCC BAA-731 / CDC346-86 / RSK2980).